A 270-amino-acid polypeptide reads, in one-letter code: UPF0354 protein BT9727_4425 (270 aa).

It belongs to the UPF0354 family.

This Bacillus thuringiensis subsp. konkukian (strain 97-27) protein is UPF0354 protein BT9727_4425.